The chain runs to 284 residues: Pantothenate synthetase (284 aa).

Residue Met30–His37 participates in ATP binding. The active-site Proton donor is His37. Gln61 serves as a coordination point for (R)-pantoate. Beta-alanine is bound at residue Gln61. Gly149–Asp152 lines the ATP pocket. Residue Gln155 participates in (R)-pantoate binding. Residues Val178 and Leu186–Arg189 contribute to the ATP site.

It belongs to the pantothenate synthetase family. Homodimer.

The protein localises to the cytoplasm. It catalyses the reaction (R)-pantoate + beta-alanine + ATP = (R)-pantothenate + AMP + diphosphate + H(+). The protein operates within cofactor biosynthesis; (R)-pantothenate biosynthesis; (R)-pantothenate from (R)-pantoate and beta-alanine: step 1/1. Its function is as follows. Catalyzes the condensation of pantoate with beta-alanine in an ATP-dependent reaction via a pantoyl-adenylate intermediate. The sequence is that of Pantothenate synthetase from Aeromonas salmonicida (strain A449).